Reading from the N-terminus, the 30-residue chain is Proteinase inhibitor CeKI (30 aa).

The protein belongs to the protease inhibitor I3 (leguminous Kunitz-type inhibitor) family.

In terms of biological role, potent inhibitor of serine proteases plasma kallikrein, plasmin and coagulation factor XIIa. Weak inhibitor of serine proteases trypsin and coagulation factor Xa. Does not inhibit the serine proteases chymotrypsin, elastase or thrombin. Inhibits kinin release from HMW-kininogen by kallikrein in vitro. This Paubrasilia echinata (Pau Brasil) protein is Proteinase inhibitor CeKI.